Consider the following 217-residue polypeptide: Protein GrpE (217 aa).

Acidic residues-rich tracts occupy residues 1–28 (MSDD…EGDD), 136–152 (DILD…DPGT), and 204–217 (SEAE…DGDE). Disordered regions lie at residues 1-44 (MSDD…NDPA), 135-157 (DDIL…TDPK), and 193-217 (QVTV…DGDE).

The protein belongs to the GrpE family. As to quaternary structure, homodimer.

The protein localises to the cytoplasm. In terms of biological role, participates actively in the response to hyperosmotic and heat shock by preventing the aggregation of stress-denatured proteins, in association with DnaK and GrpE. It is the nucleotide exchange factor for DnaK and may function as a thermosensor. Unfolded proteins bind initially to DnaJ; upon interaction with the DnaJ-bound protein, DnaK hydrolyzes its bound ATP, resulting in the formation of a stable complex. GrpE releases ADP from DnaK; ATP binding to DnaK triggers the release of the substrate protein, thus completing the reaction cycle. Several rounds of ATP-dependent interactions between DnaJ, DnaK and GrpE are required for fully efficient folding. This Natronomonas pharaonis (strain ATCC 35678 / DSM 2160 / CIP 103997 / JCM 8858 / NBRC 14720 / NCIMB 2260 / Gabara) (Halobacterium pharaonis) protein is Protein GrpE.